An 887-amino-acid chain; its full sequence is Translation initiation factor IF-2 (887 aa).

3 disordered regions span residues 31–87 (KLAQ…PRRI), 94–113 (SFVS…DSDA), and 129–285 (VETE…KWRK). Positions 42–59 (SSSEKPSTKVPEKIAKEK) are enriched in basic and acidic residues. Composition is skewed to basic and acidic residues over residues 150–171 (VVAK…KEPP) and 199–212 (PKKE…EKTK). Low complexity predominate over residues 213–223 (TTQTKPQQSSD). The span at 241–273 (YRRDVSKKSGSDFRDRAKKDDNPKAFTGRDRYG) shows a compositional bias: basic and acidic residues. In terms of domain architecture, tr-type G spans 393–562 (TRPPIVAFMG…ALQAEVLELK (170 aa)). The segment at 402–409 (GHVDHGKT) is G1. 402–409 (GHVDHGKT) lines the GTP pocket. Residues 427-431 (AITQH) are G2. The G3 stretch occupies residues 448 to 451 (DTPG). GTP-binding positions include 448–452 (DTPGH) and 502–505 (NKCD). The segment at 502 to 505 (NKCD) is G4. Residues 538–540 (SAK) form a G5 region.

This sequence belongs to the TRAFAC class translation factor GTPase superfamily. Classic translation factor GTPase family. IF-2 subfamily.

The protein resides in the cytoplasm. In terms of biological role, one of the essential components for the initiation of protein synthesis. Protects formylmethionyl-tRNA from spontaneous hydrolysis and promotes its binding to the 30S ribosomal subunits. Also involved in the hydrolysis of GTP during the formation of the 70S ribosomal complex. The chain is Translation initiation factor IF-2 from Chlamydia caviae (strain ATCC VR-813 / DSM 19441 / 03DC25 / GPIC) (Chlamydophila caviae).